A 97-amino-acid polypeptide reads, in one-letter code: Aspartyl/glutamyl-tRNA(Asn/Gln) amidotransferase subunit C (97 aa).

It belongs to the GatC family. In terms of assembly, heterotrimer of A, B and C subunits.

The catalysed reaction is L-glutamyl-tRNA(Gln) + L-glutamine + ATP + H2O = L-glutaminyl-tRNA(Gln) + L-glutamate + ADP + phosphate + H(+). It carries out the reaction L-aspartyl-tRNA(Asn) + L-glutamine + ATP + H2O = L-asparaginyl-tRNA(Asn) + L-glutamate + ADP + phosphate + 2 H(+). Allows the formation of correctly charged Asn-tRNA(Asn) or Gln-tRNA(Gln) through the transamidation of misacylated Asp-tRNA(Asn) or Glu-tRNA(Gln) in organisms which lack either or both of asparaginyl-tRNA or glutaminyl-tRNA synthetases. The reaction takes place in the presence of glutamine and ATP through an activated phospho-Asp-tRNA(Asn) or phospho-Glu-tRNA(Gln). The polypeptide is Aspartyl/glutamyl-tRNA(Asn/Gln) amidotransferase subunit C (Picosynechococcus sp. (strain ATCC 27264 / PCC 7002 / PR-6) (Agmenellum quadruplicatum)).